The primary structure comprises 269 residues: 23S rRNA (adenosine(1067)-2'-O)-methyltransferase (269 aa).

Residues R135, R165, L195, G218, I238, and L247 each contribute to the S-adenosyl-L-methionine site.

This sequence belongs to the class IV-like SAM-binding methyltransferase superfamily. RNA methyltransferase TsnR/AvirB family. As to quaternary structure, homodimer.

It catalyses the reaction adenosine(1067) in 23S rRNA + S-adenosyl-L-methionine = 2'-O-methyladenosine(1067) in 23S rRNA + S-adenosyl-L-homocysteine + H(+). Functionally, specifically methylates the adenosine-1067 in 23S ribosomal RNA. Confers resistance to antibiotic thiostrepton. The protein is 23S rRNA (adenosine(1067)-2'-O)-methyltransferase (tsnR) of Streptomyces azureus.